Consider the following 260-residue polypeptide: Carbonic anhydrase 2 (260 aa).

S2 carries the post-translational modification N-acetylserine. S2 is subject to Phosphoserine. The Alpha-carbonic anhydrase domain occupies 3–259; the sequence is HHWGYGKHNG…LKNRQIKASF (257 aa). H64 acts as the Proton donor/acceptor in catalysis. Zn(2+)-binding residues include H94, H96, and H119. Residues S165 and S172 each carry the phosphoserine modification. 198-199 contributes to the substrate binding site; that stretch reads TT.

This sequence belongs to the alpha-carbonic anhydrase family. In terms of assembly, interacts with SLC4A4. Interaction with SLC4A7 regulates SLC4A7 transporter activity. Interacts with SLC26A6 isoform 4 (via C-terminus cytoplasmic domain). Zn(2+) serves as cofactor. Co(2+) is required as a cofactor.

The protein localises to the cytoplasm. Its subcellular location is the cell membrane. It catalyses the reaction hydrogencarbonate + H(+) = CO2 + H2O. The catalysed reaction is urea = cyanamide + H2O. Activated by X-ray, histamine, L-adrenaline, L- and D-phenylalanine, L- and D-histidine, L-His-OMe and beta-Ala-His (carnosine). Competitively inhibited by saccharin, thioxolone, coumarins, 667-coumate, celecoxib (Celebrex), valdecoxib (Bextra), SC-125, SC-560, diclofenac, acetate, azide, bromide, sulfonamide derivatives such as acetazolamide (AZA), methazolamide (MZA), ethoxzolamide (EZA), dichlorophenamide (DCP), brinzolamide, dansylamide, thiabendazole-5-sulfonamide, trifluoromethane sulfonamide and N-hydroxysulfamide, fructose-based sugar sulfamate RWJ-37497, and Foscarnet (phosphonoformate trisodium salt). Repressed strongly by hydrogen sulfide(HS) and weakly by nitrate (NO(3)). Esterase activity weakly reduced by cyanamide. N-hydroxyurea interferes with zinc binding and inhibit activity. In terms of biological role, catalyzes the reversible hydration of carbon dioxide. Can also hydrate cyanamide to urea. Stimulates the chloride-bicarbonate exchange activity of SLC26A6. Essential for bone resorption and osteoclast differentiation. Involved in the regulation of fluid secretion into the anterior chamber of the eye. Contributes to intracellular pH regulation in the duodenal upper villous epithelium during proton-coupled peptide absorption. The polypeptide is Carbonic anhydrase 2 (CA2) (Homo sapiens (Human)).